Here is a 298-residue protein sequence, read N- to C-terminus: MTKQTEYKRKPEWLKIKLNTNENYTGLKKMMRSKNLHTVCEEAKCPNIHECWAVRKTATFMILGAVCTRACRFCAVKTGLPTELDLQEPERVADSVVQMGLKHVVITAVARDDLKDGGAAVFAETVRAVRRENPFTSIEVLPSDMGGVEENLKMLMDAKPDILNHNIETVRRLSNRVRARAKYDRSLEFLRRAKEMQPDIPTKSSIMLGLGETREDLIEAMDDLRANNVDILTLGQYLQPSKKHLPVIKYYPPAEFAELKEIALSKGFSHCEAGPLVRSSYHADEQVRSAKEKTAEAK.

[4Fe-4S] cluster-binding residues include C40, C45, C51, C67, C71, C74, and S280. Positions 53–269 constitute a Radical SAM core domain; it reads AVRKTATFMI…KEIALSKGFS (217 aa).

It belongs to the radical SAM superfamily. Lipoyl synthase family. [4Fe-4S] cluster serves as cofactor.

It is found in the cytoplasm. It catalyses the reaction [[Fe-S] cluster scaffold protein carrying a second [4Fe-4S](2+) cluster] + N(6)-octanoyl-L-lysyl-[protein] + 2 oxidized [2Fe-2S]-[ferredoxin] + 2 S-adenosyl-L-methionine + 4 H(+) = [[Fe-S] cluster scaffold protein] + N(6)-[(R)-dihydrolipoyl]-L-lysyl-[protein] + 4 Fe(3+) + 2 hydrogen sulfide + 2 5'-deoxyadenosine + 2 L-methionine + 2 reduced [2Fe-2S]-[ferredoxin]. It functions in the pathway protein modification; protein lipoylation via endogenous pathway; protein N(6)-(lipoyl)lysine from octanoyl-[acyl-carrier-protein]. Catalyzes the radical-mediated insertion of two sulfur atoms into the C-6 and C-8 positions of the octanoyl moiety bound to the lipoyl domains of lipoate-dependent enzymes, thereby converting the octanoylated domains into lipoylated derivatives. The chain is Lipoyl synthase from Bacillus mycoides (strain KBAB4) (Bacillus weihenstephanensis).